The chain runs to 690 residues: Elongation factor G (690 aa).

The tr-type G domain maps to 8-283; the sequence is ERYRNFGIMA…AVVDFMPSPL (276 aa). Residues 17 to 24, 81 to 85, and 135 to 138 contribute to the GTP site; these read AHIDAGKT, DTPGH, and NKLD.

This sequence belongs to the TRAFAC class translation factor GTPase superfamily. Classic translation factor GTPase family. EF-G/EF-2 subfamily.

Its subcellular location is the cytoplasm. Functionally, catalyzes the GTP-dependent ribosomal translocation step during translation elongation. During this step, the ribosome changes from the pre-translocational (PRE) to the post-translocational (POST) state as the newly formed A-site-bound peptidyl-tRNA and P-site-bound deacylated tRNA move to the P and E sites, respectively. Catalyzes the coordinated movement of the two tRNA molecules, the mRNA and conformational changes in the ribosome. The sequence is that of Elongation factor G from Novosphingobium aromaticivorans (strain ATCC 700278 / DSM 12444 / CCUG 56034 / CIP 105152 / NBRC 16084 / F199).